The chain runs to 217 residues: 3,4-dihydroxy-2-butanone 4-phosphate synthase (217 aa).

D-ribulose 5-phosphate-binding positions include 37–38 (RE), Asp42, 150–154 (RRGHT), and Glu174. Glu38 is a Mg(2+) binding site. Residue His153 participates in Mg(2+) binding.

The protein belongs to the DHBP synthase family. Homodimer. The cofactor is Mg(2+). Mn(2+) serves as cofactor.

It carries out the reaction D-ribulose 5-phosphate = (2S)-2-hydroxy-3-oxobutyl phosphate + formate + H(+). It functions in the pathway cofactor biosynthesis; riboflavin biosynthesis; 2-hydroxy-3-oxobutyl phosphate from D-ribulose 5-phosphate: step 1/1. Its function is as follows. Catalyzes the conversion of D-ribulose 5-phosphate to formate and 3,4-dihydroxy-2-butanone 4-phosphate. This Aeromonas salmonicida (strain A449) protein is 3,4-dihydroxy-2-butanone 4-phosphate synthase.